The following is a 257-amino-acid chain: MLNFYGHEFSSRLLLGTAQYPSPEILRKVIDKSGTEIVTVSLRRETAGGKHSGQFWQFLKELNVTILPNTAGCYTIKEAVTTAQLARDLFKTPWIKLEVIGNPDTLQPNIFALVEAAQILNNEGFQIFAYTTDDLIVAEKLLEVGCRVIMPWCAPIGSAKGPRDTDGLRSIRAYLPDLTLVIDAGIGRPSHATIAMELGYDAILLNTAVAKSGDPVLMAEAFSKAVNAGYMAYKAGILEARDVAVPSTPIIGKAVFS.

Catalysis depends on Lys96, which acts as the Schiff-base intermediate with DXP. Residues Gly157, 184-185, and 206-207 contribute to the 1-deoxy-D-xylulose 5-phosphate site; these read AG and NT.

The protein belongs to the ThiG family. Homotetramer. Forms heterodimers with either ThiH or ThiS.

It localises to the cytoplasm. It catalyses the reaction [ThiS sulfur-carrier protein]-C-terminal-Gly-aminoethanethioate + 2-iminoacetate + 1-deoxy-D-xylulose 5-phosphate = [ThiS sulfur-carrier protein]-C-terminal Gly-Gly + 2-[(2R,5Z)-2-carboxy-4-methylthiazol-5(2H)-ylidene]ethyl phosphate + 2 H2O + H(+). Its pathway is cofactor biosynthesis; thiamine diphosphate biosynthesis. Functionally, catalyzes the rearrangement of 1-deoxy-D-xylulose 5-phosphate (DXP) to produce the thiazole phosphate moiety of thiamine. Sulfur is provided by the thiocarboxylate moiety of the carrier protein ThiS. In vitro, sulfur can be provided by H(2)S. The chain is Thiazole synthase from Bartonella bacilliformis (strain ATCC 35685 / KC583 / Herrer 020/F12,63).